The sequence spans 151 residues: Ribonuclease H (151 aa).

The 142-residue stretch at 2 to 143 (SSNVIEIYAD…ADALANKGVD (142 aa)) folds into the RNase H type-1 domain. Positions 11, 49, 71, and 135 each coordinate Mg(2+).

The protein belongs to the RNase H family. As to quaternary structure, monomer. The cofactor is Mg(2+).

It localises to the cytoplasm. The enzyme catalyses Endonucleolytic cleavage to 5'-phosphomonoester.. Its function is as follows. Endonuclease that specifically degrades the RNA of RNA-DNA hybrids. The polypeptide is Ribonuclease H (Methylobacillus flagellatus (strain ATCC 51484 / DSM 6875 / VKM B-1610 / KT)).